An 818-amino-acid polypeptide reads, in one-letter code: Rho GTPase-activating protein 44 (818 aa).

One can recognise a BAR domain in the interval 14–249 (QTVGRAEKTE…IKAQQEAWVE (236 aa)). Positions 255-445 (KPLEEHLTIS…PIIQHADWFF (191 aa)) constitute a Rho-GAP domain. Disordered stretches follow at residues 467–493 (ANYSSMPSPDMDPADRRQPEQARRPLS), 530–772 (SSAG…SMST), and 789–818 (TLRLSPLEHMRRHSVTDKRDSEEESESTAL). The span at 479-489 (PADRRQPEQAR) shows a compositional bias: basic and acidic residues. Ser493 carries the phosphoserine modification. The span at 563–579 (QPLDSPAAPALSPSGLG) shows a compositional bias: low complexity. The segment covering 598–611 (GSAQKGSPGSSQGT) has biased composition (polar residues). Composition is skewed to low complexity over residues 614–641 (AGTQPGAQPGAQPGASPSPSQPPADQSP) and 688–708 (SPYGLSYPQGYSLASGQLSPA). Residues 731–818 (KPRQRPTLPP…SEEESESTAL (88 aa)) are interaction with BST2. Polar residues predominate over residues 746–757 (VNLSASSPQSTE). Residues 764-767 (MSPG) carry the PDZ-binding motif. The segment covering 794 to 809 (PLEHMRRHSVTDKRDS) has biased composition (basic and acidic residues). A Phosphoserine modification is found at Ser809. A PDZ-binding motif is present at residues 815–818 (STAL).

In terms of assembly, interacts with BST2 (via cytoplasmic domain). Interacts (probably via PDZ-binding motif) with SHANK3 (via PDZ domain); the interaction takes place in dendritic spines and promotes GRIA1 exocytosis. As to expression, highly expressed in brain. Expressed at weak level in other tissues.

Its subcellular location is the cell projection. The protein localises to the dendritic spine. It is found in the recycling endosome. It localises to the presynapse. The protein resides in the dendrite. Functionally, GTPase-activating protein (GAP) that stimulates the GTPase activity of Rho-type GTPases. Thereby, controls Rho-type GTPases cycling between their active GTP-bound and inactive GDP-bound states. Acts as a GAP at least for CDC42 and RAC1. In neurons, is involved in dendritic spine formation and synaptic plasticity in a specific RAC1-GAP activity. Limits the initiation of exploratory dendritic filopodia. Recruited to actin-patches that seed filopodia, binds specifically to plasma membrane sections that are deformed inward by acto-myosin mediated contractile forces. Acts through GAP activity on RAC1 to reduce actin polymerization necessary for filopodia formation. In association with SHANK3, promotes GRIA1 exocytosis from recycling endosomes and spine morphological changes associated to long-term potentiation. The chain is Rho GTPase-activating protein 44 from Homo sapiens (Human).